Reading from the N-terminus, the 116-residue chain is Large ribosomal subunit protein eL31 (116 aa).

This sequence belongs to the eukaryotic ribosomal protein eL31 family.

This chain is Large ribosomal subunit protein eL31 (RPL31), found in Chlamydomonas reinhardtii (Chlamydomonas smithii).